Reading from the N-terminus, the 244-residue chain is 1-(5-phosphoribosyl)-5-[(5-phosphoribosylamino)methylideneamino] imidazole-4-carboxamide isomerase (244 aa).

Asp15 serves as the catalytic Proton acceptor. The active-site Proton donor is Asp136.

This sequence belongs to the HisA/HisF family.

It is found in the cytoplasm. It carries out the reaction 1-(5-phospho-beta-D-ribosyl)-5-[(5-phospho-beta-D-ribosylamino)methylideneamino]imidazole-4-carboxamide = 5-[(5-phospho-1-deoxy-D-ribulos-1-ylimino)methylamino]-1-(5-phospho-beta-D-ribosyl)imidazole-4-carboxamide. Its pathway is amino-acid biosynthesis; L-histidine biosynthesis; L-histidine from 5-phospho-alpha-D-ribose 1-diphosphate: step 4/9. The polypeptide is 1-(5-phosphoribosyl)-5-[(5-phosphoribosylamino)methylideneamino] imidazole-4-carboxamide isomerase (Dehalococcoides mccartyi (strain CBDB1)).